The sequence spans 205 residues: Putative epidermin response regulator (205 aa).

A DNA-binding region (ompR/PhoB-type) is located at residues 103–200 (KYIKYVNDDF…ERKLGYKILI (98 aa)).

The protein to the C-terminus of E.coli phosphate regulon transcriptional regulatory protein PhoB.

This Staphylococcus epidermidis protein is Putative epidermin response regulator (epiQ).